We begin with the raw amino-acid sequence, 783 residues long: Centrosomal protein of 89 kDa (783 aa).

Residues 28-49 (PKAAVPRTPPPRSPNPSPERPR) are disordered. Residues 34-45 (RTPPPRSPNPSP) show a composition bias toward pro residues. Ser50 bears the Phosphoserine mark. Disordered stretches follow at residues 63–157 (GRTV…DDLY) and 176–226 (DENI…DITG). Residues 94-107 (ATTSQLRPRPNWQS) show a composition bias toward polar residues. Basic and acidic residues-rich tracts occupy residues 139 to 155 (ELGD…HSDD) and 196 to 214 (QQKD…KPPL). 2 coiled-coil regions span residues 234–333 (EITR…SRYQ) and 369–719 (LLLA…GELE).

Its subcellular location is the cytoplasm. It localises to the cytosol. The protein localises to the cytoskeleton. The protein resides in the microtubule organizing center. It is found in the centrosome. Its subcellular location is the spindle pole. It localises to the centriole. The protein localises to the mitochondrion intermembrane space. In terms of biological role, required for ciliogenesis. Also plays a role in mitochondrial metabolism where it may modulate complex IV activity. This Homo sapiens (Human) protein is Centrosomal protein of 89 kDa (CEP89).